The chain runs to 162 residues: General odorant-binding protein 2 (162 aa).

A signal peptide spans 1–18; that stretch reads MTSKSCLLLVAMVTLTTS. 3 disulfides stabilise this stretch: Cys40–Cys75, Cys71–Cys129, and Cys118–Cys138.

This sequence belongs to the PBP/GOBP family. As to expression, antenna.

Its function is as follows. Present in the aqueous fluid surrounding olfactory sensory dendrites and are thought to aid in the capture and transport of hydrophobic odorants into and through this fluid. This chain is General odorant-binding protein 2, found in Heliothis virescens (Tobacco budworm moth).